Consider the following 60-residue polypeptide: Large ribosomal subunit protein uL30 (60 aa).

Belongs to the universal ribosomal protein uL30 family. In terms of assembly, part of the 50S ribosomal subunit.

This chain is Large ribosomal subunit protein uL30, found in Carboxydothermus hydrogenoformans (strain ATCC BAA-161 / DSM 6008 / Z-2901).